Here is a 192-residue protein sequence, read N- to C-terminus: Orotate phosphoribosyltransferase (192 aa).

116 to 124 provides a ligand contact to 5-phospho-alpha-D-ribose 1-diphosphate; sequence EDIVTTGLS. The orotate site is built by Thr120 and Arg148.

The protein belongs to the purine/pyrimidine phosphoribosyltransferase family. PyrE subfamily. As to quaternary structure, homodimer. Mg(2+) serves as cofactor.

The enzyme catalyses orotidine 5'-phosphate + diphosphate = orotate + 5-phospho-alpha-D-ribose 1-diphosphate. The protein operates within pyrimidine metabolism; UMP biosynthesis via de novo pathway; UMP from orotate: step 1/2. In terms of biological role, catalyzes the transfer of a ribosyl phosphate group from 5-phosphoribose 1-diphosphate to orotate, leading to the formation of orotidine monophosphate (OMP). This Brucella canis (strain ATCC 23365 / NCTC 10854 / RM-666) protein is Orotate phosphoribosyltransferase.